Here is a 23-residue protein sequence, read N- to C-terminus: Caerulein precursor fragment R6 (23 aa).

Expressed by the skin glands.

It is found in the secreted. Its function is as follows. Antimicrobial peptide. This Xenopus ruwenzoriensis (Uganda clawed frog) protein is Caerulein precursor fragment R6.